A 241-amino-acid polypeptide reads, in one-letter code: Ribulose-phosphate 3-epimerase 2 (241 aa).

Serine 21 contributes to the substrate binding site. A divalent metal cation-binding residues include histidine 46, aspartate 48, and histidine 79. The active-site Proton acceptor is the aspartate 48. Residues histidine 79, 155–158 (GFGG), 192–194 (DGG), and 214–215 (GS) contribute to the substrate site. Aspartate 192 is a binding site for a divalent metal cation. Catalysis depends on aspartate 192, which acts as the Proton donor.

This sequence belongs to the ribulose-phosphate 3-epimerase family. A divalent metal cation serves as cofactor.

It catalyses the reaction D-ribulose 5-phosphate = D-xylulose 5-phosphate. Its pathway is carbohydrate degradation. In terms of biological role, catalyzes the reversible epimerization of D-ribulose 5-phosphate to D-xylulose 5-phosphate. The polypeptide is Ribulose-phosphate 3-epimerase 2 (Cupriavidus necator (strain ATCC 17699 / DSM 428 / KCTC 22496 / NCIMB 10442 / H16 / Stanier 337) (Ralstonia eutropha)).